Reading from the N-terminus, the 504-residue chain is Glycerol kinase (504 aa).

Thr13 is an ADP binding site. Thr13, Thr14, and Ser15 together coordinate ATP. Position 13 (Thr13) interacts with sn-glycerol 3-phosphate. Arg17 is an ADP binding site. Sn-glycerol 3-phosphate is bound by residues Arg83, Glu84, and Tyr135. Residues Arg83, Glu84, and Tyr135 each contribute to the glycerol site. His231 is subject to Phosphohistidine; by HPr. Asp245 contacts sn-glycerol 3-phosphate. Asp245 and Gln246 together coordinate glycerol. Positions 267 and 310 each coordinate ADP. ATP-binding residues include Thr267, Gly310, Gln314, and Gly411. 2 residues coordinate ADP: Gly411 and Asn415.

Belongs to the FGGY kinase family. As to quaternary structure, homotetramer and homodimer (in equilibrium). In terms of processing, the phosphoenolpyruvate-dependent sugar phosphotransferase system (PTS), including enzyme I, and histidine-containing protein (HPr) are required for the phosphorylation, which leads to the activation of the enzyme.

It carries out the reaction glycerol + ATP = sn-glycerol 3-phosphate + ADP + H(+). The protein operates within polyol metabolism; glycerol degradation via glycerol kinase pathway; sn-glycerol 3-phosphate from glycerol: step 1/1. With respect to regulation, activated by phosphorylation and inhibited by fructose 1,6-bisphosphate (FBP). Functionally, key enzyme in the regulation of glycerol uptake and metabolism. Catalyzes the phosphorylation of glycerol to yield sn-glycerol 3-phosphate. This chain is Glycerol kinase, found in Pediococcus pentosaceus (strain ATCC 25745 / CCUG 21536 / LMG 10740 / 183-1w).